We begin with the raw amino-acid sequence, 348 residues long: RNA 3'-terminal phosphate cyclase (348 aa).

ATP is bound by residues Gln107 and 290-294; that span reads HLADQ. Residue His316 is the Tele-AMP-histidine intermediate of the active site.

Belongs to the RNA 3'-terminal cyclase family. Type 1 subfamily.

It localises to the cytoplasm. It catalyses the reaction a 3'-end 3'-phospho-ribonucleotide-RNA + ATP = a 3'-end 2',3'-cyclophospho-ribonucleotide-RNA + AMP + diphosphate. Its function is as follows. Catalyzes the conversion of 3'-phosphate to a 2',3'-cyclic phosphodiester at the end of RNA. The mechanism of action of the enzyme occurs in 3 steps: (A) adenylation of the enzyme by ATP; (B) transfer of adenylate to an RNA-N3'P to produce RNA-N3'PP5'A; (C) and attack of the adjacent 2'-hydroxyl on the 3'-phosphorus in the diester linkage to produce the cyclic end product. The biological role of this enzyme is unknown but it is likely to function in some aspects of cellular RNA processing. This Nostoc punctiforme (strain ATCC 29133 / PCC 73102) protein is RNA 3'-terminal phosphate cyclase.